Reading from the N-terminus, the 209-residue chain is Pyridoxine/pyridoxamine 5'-phosphate oxidase (209 aa).

Residues 7 to 10 (RADY) and lysine 64 contribute to the substrate site. FMN is bound by residues 59 to 64 (RIVLLK), 74 to 75 (FT), and lysine 81. Positions 121, 125, and 129 each coordinate substrate. Residues 138–139 (QS), tryptophan 182, and arginine 192 contribute to the FMN site.

Belongs to the pyridoxamine 5'-phosphate oxidase family. Homodimer. FMN is required as a cofactor.

The enzyme catalyses pyridoxamine 5'-phosphate + O2 + H2O = pyridoxal 5'-phosphate + H2O2 + NH4(+). The catalysed reaction is pyridoxine 5'-phosphate + O2 = pyridoxal 5'-phosphate + H2O2. It functions in the pathway cofactor metabolism; pyridoxal 5'-phosphate salvage; pyridoxal 5'-phosphate from pyridoxamine 5'-phosphate: step 1/1. Its pathway is cofactor metabolism; pyridoxal 5'-phosphate salvage; pyridoxal 5'-phosphate from pyridoxine 5'-phosphate: step 1/1. Its function is as follows. Catalyzes the oxidation of either pyridoxine 5'-phosphate (PNP) or pyridoxamine 5'-phosphate (PMP) into pyridoxal 5'-phosphate (PLP). In Haemophilus ducreyi (strain 35000HP / ATCC 700724), this protein is Pyridoxine/pyridoxamine 5'-phosphate oxidase.